A 279-amino-acid polypeptide reads, in one-letter code: Proteasome subunit beta (279 aa).

A propeptide spans 1–56 (removed in mature form; by autocatalysis); sequence MASQAMSWRGEGERVVRDLAAASTSSFVEHLSQSRPDLLPFGQALPAGVLPQTPHA. T57 acts as the Nucleophile in catalysis.

Belongs to the peptidase T1B family. As to quaternary structure, the 20S proteasome core is composed of 14 alpha and 14 beta subunits that assemble into four stacked heptameric rings, resulting in a barrel-shaped structure. The two inner rings, each composed of seven catalytic beta subunits, are sandwiched by two outer rings, each composed of seven alpha subunits. The catalytic chamber with the active sites is on the inside of the barrel. Has a gated structure, the ends of the cylinder being occluded by the N-termini of the alpha-subunits. Is capped by the proteasome-associated ATPase, ARC.

Its subcellular location is the cytoplasm. The enzyme catalyses Cleavage of peptide bonds with very broad specificity.. It participates in protein degradation; proteasomal Pup-dependent pathway. With respect to regulation, the formation of the proteasomal ATPase ARC-20S proteasome complex, likely via the docking of the C-termini of ARC into the intersubunit pockets in the alpha-rings, may trigger opening of the gate for substrate entry. Interconversion between the open-gate and close-gate conformations leads to a dynamic regulation of the 20S proteasome proteolysis activity. Its function is as follows. Component of the proteasome core, a large protease complex with broad specificity involved in protein degradation. The protein is Proteasome subunit beta of Renibacterium salmoninarum (strain ATCC 33209 / DSM 20767 / JCM 11484 / NBRC 15589 / NCIMB 2235).